Reading from the N-terminus, the 20-residue chain is Cytochrome c oxidase subunit 8B, mitochondrial (20 aa).

This sequence belongs to the cytochrome c oxidase VIII family. Component of the cytochrome c oxidase (complex IV, CIV), a multisubunit enzyme composed of 14 subunits. The complex is composed of a catalytic core of 3 subunits MT-CO1, MT-CO2 and MT-CO3, encoded in the mitochondrial DNA, and 11 supernumerary subunits COX4I, COX5A, COX5B, COX6A, COX6B, COX6C, COX7A, COX7B, COX7C, COX8 and NDUFA4, which are encoded in the nuclear genome. The complex exists as a monomer or a dimer and forms supercomplexes (SCs) in the inner mitochondrial membrane with NADH-ubiquinone oxidoreductase (complex I, CI) and ubiquinol-cytochrome c oxidoreductase (cytochrome b-c1 complex, complex III, CIII), resulting in different assemblies (supercomplex SCI(1)III(2)IV(1) and megacomplex MCI(2)III(2)IV(2)).

The protein localises to the mitochondrion inner membrane. The protein operates within energy metabolism; oxidative phosphorylation. Functionally, component of the cytochrome c oxidase, the last enzyme in the mitochondrial electron transport chain which drives oxidative phosphorylation. The respiratory chain contains 3 multisubunit complexes succinate dehydrogenase (complex II, CII), ubiquinol-cytochrome c oxidoreductase (cytochrome b-c1 complex, complex III, CIII) and cytochrome c oxidase (complex IV, CIV), that cooperate to transfer electrons derived from NADH and succinate to molecular oxygen, creating an electrochemical gradient over the inner membrane that drives transmembrane transport and the ATP synthase. Cytochrome c oxidase is the component of the respiratory chain that catalyzes the reduction of oxygen to water. Electrons originating from reduced cytochrome c in the intermembrane space (IMS) are transferred via the dinuclear copper A center (CU(A)) of subunit 2 and heme A of subunit 1 to the active site in subunit 1, a binuclear center (BNC) formed by heme A3 and copper B (CU(B)). The BNC reduces molecular oxygen to 2 water molecules using 4 electrons from cytochrome c in the IMS and 4 protons from the mitochondrial matrix. The polypeptide is Cytochrome c oxidase subunit 8B, mitochondrial (Thunnus obesus (Bigeye tuna)).